The primary structure comprises 138 residues: Cysteine desulfuration protein SufE (138 aa).

Cysteine 51 serves as the catalytic Cysteine persulfide intermediate.

It belongs to the SufE family. Homodimer. Interacts with SufS.

It is found in the cytoplasm. It participates in cofactor biosynthesis; iron-sulfur cluster biosynthesis. Functionally, participates in cysteine desulfuration mediated by SufS. Cysteine desulfuration mobilizes sulfur from L-cysteine to yield L-alanine and constitutes an essential step in sulfur metabolism for biosynthesis of a variety of sulfur-containing biomolecules. Functions as a sulfur acceptor for SufS, by mediating the direct transfer of the sulfur atom from the S-sulfanylcysteine of SufS, an intermediate product of cysteine desulfuration process. This is Cysteine desulfuration protein SufE from Pectobacterium carotovorum subsp. carotovorum (strain PC1).